The sequence spans 180 residues: Nascent polypeptide-associated complex subunit alpha (180 aa).

Residues 16–80 enclose the NAC-A/B domain; that stretch reads SKNEKKAREL…AKVDDMNKRI (65 aa). Residues 81 to 113 form a disordered region; sequence AEAQQQQAQQDALSKAAGETGEAGEEDKSQDAI. Residues 82 to 100 show a composition bias toward low complexity; sequence EAQQQQAQQDALSKAAGET. Residues 142–179 enclose the UBA domain; that stretch reads LDAKDIDIIVEQTQVSRAKAVKALRVHDGDMVNAIMEL.

It belongs to the NAC-alpha family. Part of the nascent polypeptide-associated complex (NAC), consisting of EGD2 and EGD1. NAC associates with ribosomes via EGD1.

It is found in the cytoplasm. Its subcellular location is the nucleus. Component of the nascent polypeptide-associated complex (NAC), a dynamic component of the ribosomal exit tunnel, protecting the emerging polypeptides from interaction with other cytoplasmic proteins to ensure appropriate nascent protein targeting. The NAC complex also promotes mitochondrial protein import by enhancing productive ribosome interactions with the outer mitochondrial membrane and blocks the inappropriate interaction of ribosomes translating non-secretory nascent polypeptides with translocation sites in the membrane of the endoplasmic reticulum. EGD2 may also be involved in transcription regulation. The sequence is that of Nascent polypeptide-associated complex subunit alpha (EGD2) from Debaryomyces hansenii (strain ATCC 36239 / CBS 767 / BCRC 21394 / JCM 1990 / NBRC 0083 / IGC 2968) (Yeast).